Consider the following 699-residue polypeptide: tRNA(Met) cytidine acetyltransferase TmcA (699 aa).

ATP is bound by residues Gln-179, 201–210 (GRGKSTLAGM), and Arg-323. In terms of domain architecture, N-acetyltransferase spans 359 to 543 (IEIPLYEQRD…SGCYTAMALL (185 aa)). Acetyl-CoA-binding positions include 471–473 (VAV), Glu-511, and Arg-518.

Belongs to the RNA cytidine acetyltransferase family. TmcA subfamily.

It is found in the cytoplasm. It catalyses the reaction cytidine(34) in elongator tRNA(Met) + acetyl-CoA + ATP + H2O = N(4)-acetylcytidine(34) in elongator tRNA(Met) + ADP + phosphate + CoA + H(+). Functionally, catalyzes the formation of N(4)-acetylcytidine (ac(4)C) at the wobble position of tRNA(Met), by using acetyl-CoA as an acetyl donor and ATP (or GTP). The polypeptide is tRNA(Met) cytidine acetyltransferase TmcA (Yersinia pestis (strain D106004)).